The chain runs to 397 residues: MLFNYLRKPNPTNLLTSPDSFRYFEYGMFCMGWHTPATHKIIYYITSCLIFAWCAVYLPIGIIISFKTDINTFTPNELLTVMQLFFNSVGMPFKVLFFNLYISGFYKAKKLLSEMDKRCTTLKERVEVHQGVVRCNKAYLIYQFIYTAYTISTFLSAALSGKLPWRIYNPFVDFRESRSSFWKAALNETALMLFAVTQTLMSDIYPLLYGLILRVHLKLLRLRVESLCTDSGKSDAENEQDLIKCIKDHNLIIDYAAAIRPAVTRTIFVQFLLIGICLGLSMINLLFFADIWTGLATVAYINGLMVQTFPFCFVCDLLKKDCELLVSAIFHSNWINSSRSYKSSLRYFLKNAQKSIAFTAGSIFPISTGSNIKVAKLAFSVVTFVNQLNIADRLTKN.

The Cytoplasmic segment spans residues 1–43 (MLFNYLRKPNPTNLLTSPDSFRYFEYGMFCMGWHTPATHKIIY). Residues 44–64 (YITSCLIFAWCAVYLPIGIII) traverse the membrane as a helical segment. Residues 65–77 (SFKTDINTFTPNE) are Extracellular-facing. Residues 78–98 (LLTVMQLFFNSVGMPFKVLFF) traverse the membrane as a helical segment. Residues 99–138 (NLYISGFYKAKKLLSEMDKRCTTLKERVEVHQGVVRCNKA) lie on the Cytoplasmic side of the membrane. A helical membrane pass occupies residues 139-159 (YLIYQFIYTAYTISTFLSAAL). Topologically, residues 160-192 (SGKLPWRIYNPFVDFRESRSSFWKAALNETALM) are extracellular. Residue Asn-187 is glycosylated (N-linked (GlcNAc...) asparagine). Residues 193–213 (LFAVTQTLMSDIYPLLYGLIL) traverse the membrane as a helical segment. Residues 214–266 (RVHLKLLRLRVESLCTDSGKSDAENEQDLIKCIKDHNLIIDYAAAIRPAVTRT) are Cytoplasmic-facing. Residues 267 to 287 (IFVQFLLIGICLGLSMINLLF) form a helical membrane-spanning segment. Topologically, residues 288–293 (FADIWT) are extracellular. The chain crosses the membrane as a helical span at residues 294 to 314 (GLATVAYINGLMVQTFPFCFV). Residues 315–354 (CDLLKKDCELLVSAIFHSNWINSSRSYKSSLRYFLKNAQK) are Cytoplasmic-facing. A helical membrane pass occupies residues 355–375 (SIAFTAGSIFPISTGSNIKVA). Topologically, residues 376 to 397 (KLAFSVVTFVNQLNIADRLTKN) are extracellular.

It belongs to the insect chemoreceptor superfamily. Heteromeric odorant receptor channel (TC 1.A.69) family. Or2a subfamily. In terms of assembly, interacts with Orco. Complexes exist early in the endomembrane system in olfactory sensory neurons (OSNs), coupling these complexes to the conserved ciliary trafficking pathway. In terms of tissue distribution, expressed in olfactory sensory neurons in the antenna.

It is found in the cell membrane. Functionally, odorant receptor which mediates acceptance or avoidance behavior, depending on its substrates. The odorant receptor repertoire encodes a large collection of odor stimuli that vary widely in identity, intensity, and duration. May form a complex with Orco to form odorant-sensing units, providing sensitive and prolonged odorant signaling and calcium permeability. This Drosophila melanogaster (Fruit fly) protein is Odorant receptor 98a (Or98a).